The chain runs to 692 residues: Peroxisomal primary amine oxidase (692 aa).

The span at 1–22 shows a compositional bias: low complexity; sequence MERLRQIASQATAASAAPARPA. A disordered region spans residues 1–26; sequence MERLRQIASQATAASAAPARPAHPLD. Asparagine 243 carries N-linked (GlcNAc...) asparagine glycosylation. 317–328 is a substrate binding site; the sequence is ALDIGEYGAGYM. The Proton acceptor role is filled by aspartate 319. Cysteine 338 and cysteine 364 are joined by a disulfide. 402–407 contributes to the substrate binding site; it reads AANYEY. The active-site Schiff-base intermediate with substrate; via topaquinone is the tyrosine 405. Tyrosine 405 is subject to 2',4',5'-topaquinone. The Cu cation site is built by histidine 456 and histidine 458. Mn(2+) is bound by residues aspartate 465, aspartate 613, and isoleucine 614. Histidine 624 lines the Cu cation pocket.

This sequence belongs to the copper/topaquinone oxidase family. As to quaternary structure, homodimer. Cu cation serves as cofactor. Requires Zn(2+) as cofactor. L-topaquinone is required as a cofactor. It depends on Mn(2+) as a cofactor. Post-translationally, topaquinone (TPQ) is generated by copper-dependent autoxidation of a specific tyrosyl residue.

It is found in the peroxisome. It carries out the reaction a primary methyl amine + O2 + H2O = an aldehyde + H2O2 + NH4(+). This Pichia angusta (Yeast) protein is Peroxisomal primary amine oxidase (AMO).